The following is a 577-amino-acid chain: Arginine--tRNA ligase (577 aa).

The 'HIGH' region signature appears at 122–132 (PNVAKEMHVGH).

Belongs to the class-I aminoacyl-tRNA synthetase family. As to quaternary structure, monomer.

Its subcellular location is the cytoplasm. It carries out the reaction tRNA(Arg) + L-arginine + ATP = L-arginyl-tRNA(Arg) + AMP + diphosphate. In Escherichia coli O9:H4 (strain HS), this protein is Arginine--tRNA ligase.